Reading from the N-terminus, the 120-residue chain is Small ribosomal subunit protein uS13 (120 aa).

Residues 94–120 (GLPLRGQRTRTNARTRKGPRKAIAGKK) are disordered.

This sequence belongs to the universal ribosomal protein uS13 family. In terms of assembly, part of the 30S ribosomal subunit. Forms a loose heterodimer with protein S19. Forms two bridges to the 50S subunit in the 70S ribosome.

In terms of biological role, located at the top of the head of the 30S subunit, it contacts several helices of the 16S rRNA. In the 70S ribosome it contacts the 23S rRNA (bridge B1a) and protein L5 of the 50S subunit (bridge B1b), connecting the 2 subunits; these bridges are implicated in subunit movement. Contacts the tRNAs in the A and P-sites. The protein is Small ribosomal subunit protein uS13 of Azoarcus sp. (strain BH72).